Consider the following 1444-residue polypeptide: RNA-directed RNA polymerase P1 (1444 aa).

Residues 157–181 (EEIQMDESQSDKRRRKKRMEKSRPV) are disordered. The RdRp catalytic domain occupies 690-897 (LGVGFATLYQ…KTVISHISGE (208 aa)).

The protein belongs to the reoviridae RNA-directed RNA polymerase family.

It is found in the virion. The protein resides in the host cytoplasm. The catalysed reaction is RNA(n) + a ribonucleoside 5'-triphosphate = RNA(n+1) + diphosphate. RNA-directed RNA polymerase that is involved in both transcription and genome replication. Together with the capping enzyme P5 and protein P7, forms an enzyme complex positioned near the channels situated at each of the five-fold vertices of the core. This is RNA-directed RNA polymerase P1 from Rice dwarf virus (isolate Akita) (RDV).